The chain runs to 143 residues: Papain inhibitor (143 aa).

The N-terminal stretch at 1 to 33 (MREFRRVRRVRFAACALVAAATGITLAAGPASA) is a signal peptide.

As to quaternary structure, monomer.

Its subcellular location is the secreted. Its function is as follows. Stress protein produced under hyperthermal stress conditions. Serves as a glutamine and lysine donor substrate for transglutaminase. Inhibits the cysteine proteases papain and bromelain as well as the bovine serine protease trypsin. Has hardly any or no effect on subtilisin, bovine chymotrypsin, proteinase K from T.album, transglutaminase-activating metalloproteinase (TAMEP) from S.mobaraensis, dispase from B.polymyxa, thermolysin from B.thermoproteolyticus or collagenase from C.histolyticum. This chain is Papain inhibitor (pi), found in Streptomyces mobaraensis (Streptoverticillium mobaraense).